We begin with the raw amino-acid sequence, 264 residues long: Undecaprenyl-diphosphatase (264 aa).

The next 8 helical transmembrane spans lie at 7 to 27 (IVIPIIIGIIQGITEFFPVSS), 45 to 65 (TKILEIFVQLGSTISVFLFFY), 86 to 106 (IHVLISILPTMFLGLIFYNKI), 109 to 129 (LFNPTNVMYALILGGFFLIIA), 145 to 165 (INLVQSLIIGCFQTLCLYPGF), 186 to 206 (VNFSFIISIPLIAGASVLDLI), 215 to 235 (LNIPYLFSGFTISFIISFLLI), and 244 to 264 (KVSLTFFGIYRFLIAGIIYFI).

Belongs to the UppP family.

It localises to the cell membrane. It carries out the reaction di-trans,octa-cis-undecaprenyl diphosphate + H2O = di-trans,octa-cis-undecaprenyl phosphate + phosphate + H(+). Catalyzes the dephosphorylation of undecaprenyl diphosphate (UPP). Confers resistance to bacitracin. This Buchnera aphidicola subsp. Schizaphis graminum (strain Sg) protein is Undecaprenyl-diphosphatase.